A 700-amino-acid chain; its full sequence is Glycine--tRNA ligase beta subunit (700 aa).

Belongs to the class-II aminoacyl-tRNA synthetase family. Tetramer of two alpha and two beta subunits.

Its subcellular location is the cytoplasm. It carries out the reaction tRNA(Gly) + glycine + ATP = glycyl-tRNA(Gly) + AMP + diphosphate. The chain is Glycine--tRNA ligase beta subunit from Janthinobacterium sp. (strain Marseille) (Minibacterium massiliensis).